The chain runs to 300 residues: 4-hydroxy-tetrahydrodipicolinate synthase (300 aa).

T45 is a pyruvate binding site. The Proton donor/acceptor role is filled by Y140. Residue K169 is the Schiff-base intermediate with substrate of the active site. I210 serves as a coordination point for pyruvate.

Belongs to the DapA family. As to quaternary structure, homotetramer; dimer of dimers.

Its subcellular location is the cytoplasm. The enzyme catalyses L-aspartate 4-semialdehyde + pyruvate = (2S,4S)-4-hydroxy-2,3,4,5-tetrahydrodipicolinate + H2O + H(+). It participates in amino-acid biosynthesis; L-lysine biosynthesis via DAP pathway; (S)-tetrahydrodipicolinate from L-aspartate: step 3/4. Catalyzes the condensation of (S)-aspartate-beta-semialdehyde [(S)-ASA] and pyruvate to 4-hydroxy-tetrahydrodipicolinate (HTPA). The sequence is that of 4-hydroxy-tetrahydrodipicolinate synthase from Helicobacter pylori (strain HPAG1).